We begin with the raw amino-acid sequence, 197 residues long: Small ribosomal subunit protein uS4B (197 aa).

The region spanning 88–150 (SRLDNMVYRM…SRKTEMFVNN (63 aa)) is the S4 RNA-binding domain.

This sequence belongs to the universal ribosomal protein uS4 family. Part of the 30S ribosomal subunit. Contacts protein S5. The interaction surface between S4 and S5 is involved in control of translational fidelity.

Its function is as follows. One of the primary rRNA binding proteins, it binds directly to 16S rRNA where it nucleates assembly of the body of the 30S subunit. In terms of biological role, with S5 and S12 plays an important role in translational accuracy. This chain is Small ribosomal subunit protein uS4B, found in Clostridium perfringens (strain ATCC 13124 / DSM 756 / JCM 1290 / NCIMB 6125 / NCTC 8237 / Type A).